The sequence spans 1755 residues: Transposon Ty1-OR Gag-Pol polyprotein (1755 aa).

Composition is skewed to polar residues over residues 1 to 10 (MESQQLSNYP), 48 to 60 (TKANSQQTTTPAS), and 127 to 152 (QSQFPQYPSSVGTPLSTPSPESGNTF). Disordered stretches follow at residues 1 to 93 (MESQ…MMTQ), 126 to 173 (PQSQ…RPPP), and 352 to 421 (GSRN…SKST). A compositionally biased stretch (low complexity) spans 153–165 (TDSSSADSDMTST). The tract at residues 299 to 401 (NNGIHINNKV…NSKSKTARAH (103 aa)) is RNA-binding. The segment covering 402–418 (NVSTSNNSPSTDNDSIS) has biased composition (low complexity). Ser-416 carries the phosphoserine modification. Asp-461 acts as the For protease activity; shared with dimeric partner in catalysis. An integrase-type zinc finger-like region spans residues 583–640 (NVHTSESTRKYPYPFIHRMLAHANAQTIRYSLKNNTITYFNESDVDWSSAIDYQCPDC). The Integrase catalytic domain maps to 660 to 835 (NSYEPFQYLH…AGLDISTLLP (176 aa)). Mg(2+)-binding residues include Asp-671 and Asp-736. 3 disordered regions span residues 956–1087 (SKAV…ETEK), 1092–1111 (RSPSIDASPPENNSSHNIVP), and 1130–1187 (DLPL…DNET). A compositionally biased stretch (low complexity) spans 960 to 969 (SPTDSTPPST). Positions 1005 to 1015 (STPQISNIEST) are enriched in polar residues. Basic and acidic residues predominate over residues 1038–1053 (ESSHASKSKDFRHSDS). 2 stretches are compositionally biased toward polar residues: residues 1054–1082 (YSENETNHTNVPISSTGGTNNKTVPQISD) and 1101–1111 (PENNSSHNIVP). A Bipartite nuclear localization signal motif is present at residues 1178 to 1212 (KKRSLEDNETEIKVSRDTWNTKNMRSLEPPRSKKR). One can recognise a Reverse transcriptase Ty1/copia-type domain in the interval 1338–1476 (NNYYITQLDI…DILGLEIKYQ (139 aa)). Residues Asp-1346, Asp-1427, Asp-1428, Asp-1610, Glu-1652, and Asp-1685 each contribute to the Mg(2+) site. The RNase H Ty1/copia-type domain maps to 1610–1752 (DASYGNQPYY…IKTFKLLTNK (143 aa)).

The capsid protein forms a homotrimer, from which the VLPs are assembled. The protease is a homodimer, whose active site consists of two apposed aspartic acid residues. In terms of processing, initially, virus-like particles (VLPs) are composed of the structural unprocessed proteins Gag and Gag-Pol, and also contain the host initiator methionine tRNA (tRNA(i)-Met) which serves as a primer for minus-strand DNA synthesis, and a dimer of genomic Ty RNA. Processing of the polyproteins occurs within the particle and proceeds by an ordered pathway, called maturation. First, the protease (PR) is released by autocatalytic cleavage of the Gag-Pol polyprotein yielding capsid protein p45 and a Pol-p154 precursor protein. This cleavage is a prerequisite for subsequent processing of Pol-p154 at the remaining sites to release the mature structural and catalytic proteins. Maturation takes place prior to the RT reaction and is required to produce transposition-competent VLPs.

It is found in the cytoplasm. Its subcellular location is the nucleus. It carries out the reaction DNA(n) + a 2'-deoxyribonucleoside 5'-triphosphate = DNA(n+1) + diphosphate. The catalysed reaction is Endonucleolytic cleavage to 5'-phosphomonoester.. Capsid protein (CA) is the structural component of the virus-like particle (VLP), forming the shell that encapsulates the retrotransposons dimeric RNA genome. The particles are assembled from trimer-clustered units and there are holes in the capsid shells that allow for the diffusion of macromolecules. CA also has nucleocapsid-like chaperone activity, promoting primer tRNA(i)-Met annealing to the multipartite primer-binding site (PBS), dimerization of Ty1 RNA and initiation of reverse transcription. In terms of biological role, the aspartyl protease (PR) mediates the proteolytic cleavages of the Gag and Gag-Pol polyproteins after assembly of the VLP. Its function is as follows. Reverse transcriptase/ribonuclease H (RT) is a multifunctional enzyme that catalyzes the conversion of the retro-elements RNA genome into dsDNA within the VLP. The enzyme displays a DNA polymerase activity that can copy either DNA or RNA templates, and a ribonuclease H (RNase H) activity that cleaves the RNA strand of RNA-DNA heteroduplexes during plus-strand synthesis and hydrolyzes RNA primers. The conversion leads to a linear dsDNA copy of the retrotransposon that includes long terminal repeats (LTRs) at both ends. Functionally, integrase (IN) targets the VLP to the nucleus, where a subparticle preintegration complex (PIC) containing at least integrase and the newly synthesized dsDNA copy of the retrotransposon must transit the nuclear membrane. Once in the nucleus, integrase performs the integration of the dsDNA into the host genome. The sequence is that of Transposon Ty1-OR Gag-Pol polyprotein (TY1B-OR) from Saccharomyces cerevisiae (strain ATCC 204508 / S288c) (Baker's yeast).